A 332-amino-acid polypeptide reads, in one-letter code: Hygromycin-B 7''-O-kinase (332 aa).

Catalysis depends on D223, which acts as the Proton acceptor.

The protein belongs to the aminoglycoside phosphotransferase family.

It carries out the reaction hygromycin B + ATP = 7''-O-phosphohygromycin B + ADP + H(+). Its function is as follows. The aminoglycoside phosphotransferases achieve inactivation of their antibiotic substrates by phosphorylation. The polypeptide is Hygromycin-B 7''-O-kinase (hyg) (Streptomyces hygroscopicus).